The sequence spans 292 residues: Protein CHLOROPLAST ENHANCING STRESS TOLERANCE, chloroplastic (292 aa).

Over residues 1 to 15 (MALLSPPSPPPPLPP) the composition is skewed to pro residues. Residues 1–67 (MALLSPPSPP…RSSRRRRRVA (67 aa)) constitute a chloroplast transit peptide. 2 disordered regions span residues 1-119 (MALL…DLED) and 206-225 (MEAPKKKSKPGKSVYAKATD). Composition is skewed to low complexity over residues 49 to 58 (STANARAYSR) and 94 to 107 (ASSDGAAGDIASSA). Residues 267-287 (ALYLLTAFPVIIGISVVLILF) traverse the membrane as a helical segment.

The protein belongs to the Y3IP1/CEST family.

The protein localises to the plastid. It is found in the chloroplast thylakoid membrane. In terms of biological role, involved in light-induced chloroplast development and growth. Involved in the plant response to abiotic and photooxidative stresses. May be involved in the suppression of photooxidative damage. The sequence is that of Protein CHLOROPLAST ENHANCING STRESS TOLERANCE, chloroplastic from Oryza sativa subsp. indica (Rice).